Here is a 72-residue protein sequence, read N- to C-terminus: BBSome-interacting protein 1 (72 aa).

Belongs to the BBIP10 family.

The protein resides in the cell projection. It localises to the cilium. It is found in the cytoplasm. Its function is as follows. Required for primary cilia assembly. This is BBSome-interacting protein 1 (bbip1) from Danio rerio (Zebrafish).